The sequence spans 485 residues: Glutamyl-tRNA(Gln) amidotransferase subunit A (485 aa).

Catalysis depends on charge relay system residues lysine 79 and serine 154. The Acyl-ester intermediate role is filled by serine 178.

It belongs to the amidase family. GatA subfamily. In terms of assembly, heterotrimer of A, B and C subunits.

It catalyses the reaction L-glutamyl-tRNA(Gln) + L-glutamine + ATP + H2O = L-glutaminyl-tRNA(Gln) + L-glutamate + ADP + phosphate + H(+). In terms of biological role, allows the formation of correctly charged Gln-tRNA(Gln) through the transamidation of misacylated Glu-tRNA(Gln) in organisms which lack glutaminyl-tRNA synthetase. The reaction takes place in the presence of glutamine and ATP through an activated gamma-phospho-Glu-tRNA(Gln). The chain is Glutamyl-tRNA(Gln) amidotransferase subunit A from Staphylococcus epidermidis (strain ATCC 12228 / FDA PCI 1200).